A 760-amino-acid chain; its full sequence is DEAD-box ATP-dependent RNA helicase 24 (760 aa).

Disordered regions lie at residues 1–76 and 90–113; these read MSNR…GEVD and QEMK…DDDD. Positions 14-27 are enriched in polar residues; that stretch reads NRQTSYSFERSQAP. Acidic residues predominate over residues 41–64; it reads NSEDADLDNIDYMENEEAEEDIEE. Positions 99-109 are enriched in basic and acidic residues; that stretch reads KPKEKLERYKD. Position 160 is a phosphoserine (Ser-160). Residues 228 to 256 carry the Q motif motif; the sequence is KTFEDCGFSSQIMSAIKKQAYEKPTAIQC. A Helicase ATP-binding domain is found at 259 to 434; that stretch reads LPIVLSGRDV…REILSDPIRV (176 aa). 272–279 is a binding site for ATP; sequence AKTGSGKT. A DEAD box motif is present at residues 382 to 385; it reads DEAD. Positions 459–608 constitute a Helicase C-terminal domain; sequence KLPWLLEKLP…NVPPELTDLA (150 aa). 3 disordered regions span residues 604–638, 647–666, and 706–760; these read LTDL…KGVR, GFSS…SRSG, and FVSG…GWDN. Basic residues predominate over residues 615-628; the sequence is KSKRDGRKGGKKGR. The segment covering 629-638 has biased composition (gly residues); it reads GGGGGNKGVR. Polar residues predominate over residues 649 to 666; sequence SSESSRTPSSKAAPSRSG. Residues 707-716 are compositionally biased toward gly residues; that stretch reads VSGGTIGGDM. The span at 718–732 shows a compositional bias: polar residues; sequence RTQSQAPPVAPTQNA. Positions 733-745 are enriched in low complexity; it reads SSHNSSQNHSQSS. Basic residues predominate over residues 750 to 760; sequence RERKRRSGWDN.

This sequence belongs to the DEAD box helicase family.

The enzyme catalyses ATP + H2O = ADP + phosphate + H(+). The chain is DEAD-box ATP-dependent RNA helicase 24 (RH24) from Arabidopsis thaliana (Mouse-ear cress).